Here is a 168-residue protein sequence, read N- to C-terminus: Peptide deformylase 2 (168 aa).

C91 and H133 together coordinate Fe cation. E134 is an active-site residue. Residue H137 participates in Fe cation binding.

This sequence belongs to the polypeptide deformylase family. Fe(2+) is required as a cofactor.

It catalyses the reaction N-terminal N-formyl-L-methionyl-[peptide] + H2O = N-terminal L-methionyl-[peptide] + formate. Functionally, removes the formyl group from the N-terminal Met of newly synthesized proteins. Requires at least a dipeptide for an efficient rate of reaction. N-terminal L-methionine is a prerequisite for activity but the enzyme has broad specificity at other positions. In Vibrio cholerae serotype O1 (strain ATCC 39315 / El Tor Inaba N16961), this protein is Peptide deformylase 2.